Reading from the N-terminus, the 233-residue chain is Short chain dehydrogenase trt9 (233 aa).

The NADP(+) site is built by Asp33, Arg95, Tyr127, Lys131, and Val160. Tyr127 acts as the Proton donor in catalysis. Lys131 (lowers pKa of active site Tyr) is an active-site residue.

The protein belongs to the short-chain dehydrogenases/reductases (SDR) family.

It functions in the pathway secondary metabolite biosynthesis; terpenoid biosynthesis. In terms of biological role, short chain dehydrogenase; part of the gene cluster that mediates the biosynthesis of terretonin, a fungal meroterpenoid that acts as a mycotoxin. The first step of the pathway is the synthesis of 3,5-dimethylorsellinic acid (DMOA) by the polyketide synthase trt4. DMOA is then prenylated into farnesyl-DMOA by the polyprenyl transferase trt2. Methylation by the methyltransferase trt5 then leads to farnesyl-DMOA methyl ester which is further subject to epoxidation by the FAD-dependent monooxygenase trt8 to yield epoxyfarnesyl-DMOA methyl ester. Cyclization of epoxyfarnesyl-DMOA methyl ester by the terpene cyclase trt1 leads to a tetracycle intermediate which is in turn converted to preterretonin. Dehydrogenase trt9 comes next to transform preterretonin to preterrenoid. The FAD-dependent monooxygenase trt3 is then required for the C-hydroxylation at C16 of preterrenoid to yield terrenoid. The cytochrome P450 trt6 catalyzes three successive oxidations to transform terrenoid into an unstable intermediate, which then undergoes the D-ring expansion and unusual rearrangement of the methoxy group to afford the core skeleton of terretonin. Trt14 catalyzes the D-ring expansion of terretonin involving intramolecular methoxy rearrangement as well as the hydrolysis of the expanded D-ring and the methyl ester moiety. Finally, the nonheme iron-dependent dioxygenase trt7 accomplishes the last two oxidation reactions steps to complete the biosynthesis of terretonin. Terretonin C is produced via spontaneous decarboxylation of the terretonin precursor. Another shunt product of the terretonin biosynthesis is dihydrofarnesyl-DMOA, derived from epoxyfarnesyl-DMOA through hydrolysis of the epoxide. This is Short chain dehydrogenase trt9 from Aspergillus terreus (strain NIH 2624 / FGSC A1156).